We begin with the raw amino-acid sequence, 429 residues long: Bifunctional protein GlmU (429 aa).

The segment at 1–223 (MKTSILILAA…EDEFMGINDK (223 aa)) is pyrophosphorylase. Residues 8–11 (LAAG), K22, Q74, and 81–82 (GT) each bind UDP-N-acetyl-alpha-D-glucosamine. D102 serves as a coordination point for Mg(2+). UDP-N-acetyl-alpha-D-glucosamine-binding residues include G135, E149, N164, and N221. Position 221 (N221) interacts with Mg(2+). Residues 224–244 (FELSIAENFMQEKIKKYWMQQ) are linker. Residues 245–429 (GVIFHLPQST…KNYYYKKFQK (185 aa)) form an N-acetyltransferase region. Residues R308 and K325 each contribute to the UDP-N-acetyl-alpha-D-glucosamine site. H336 acts as the Proton acceptor in catalysis. Positions 339 and 350 each coordinate UDP-N-acetyl-alpha-D-glucosamine. Acetyl-CoA is bound by residues 359 to 360 (NY), S378, A396, and R413.

This sequence in the N-terminal section; belongs to the N-acetylglucosamine-1-phosphate uridyltransferase family. It in the C-terminal section; belongs to the transferase hexapeptide repeat family. As to quaternary structure, homotrimer. Mg(2+) serves as cofactor.

It is found in the cytoplasm. The catalysed reaction is alpha-D-glucosamine 1-phosphate + acetyl-CoA = N-acetyl-alpha-D-glucosamine 1-phosphate + CoA + H(+). It carries out the reaction N-acetyl-alpha-D-glucosamine 1-phosphate + UTP + H(+) = UDP-N-acetyl-alpha-D-glucosamine + diphosphate. It participates in nucleotide-sugar biosynthesis; UDP-N-acetyl-alpha-D-glucosamine biosynthesis; N-acetyl-alpha-D-glucosamine 1-phosphate from alpha-D-glucosamine 6-phosphate (route II): step 2/2. Its pathway is nucleotide-sugar biosynthesis; UDP-N-acetyl-alpha-D-glucosamine biosynthesis; UDP-N-acetyl-alpha-D-glucosamine from N-acetyl-alpha-D-glucosamine 1-phosphate: step 1/1. It functions in the pathway bacterial outer membrane biogenesis; LPS lipid A biosynthesis. Its function is as follows. Catalyzes the last two sequential reactions in the de novo biosynthetic pathway for UDP-N-acetylglucosamine (UDP-GlcNAc). The C-terminal domain catalyzes the transfer of acetyl group from acetyl coenzyme A to glucosamine-1-phosphate (GlcN-1-P) to produce N-acetylglucosamine-1-phosphate (GlcNAc-1-P), which is converted into UDP-GlcNAc by the transfer of uridine 5-monophosphate (from uridine 5-triphosphate), a reaction catalyzed by the N-terminal domain. The protein is Bifunctional protein GlmU of Campylobacter jejuni subsp. doylei (strain ATCC BAA-1458 / RM4099 / 269.97).